Consider the following 351-residue polypeptide: Ceramide hydroxylase (351 aa).

Transmembrane regions (helical) follow at residues 26-46, 47-67, 141-161, and 204-224; these read AAIY…GFLI, AATT…MLAL, GFLF…AILI, and VACW…VVPV.

It belongs to the fatty acid desaturase type 1 family.

The protein resides in the cell inner membrane. The protein operates within lipid metabolism; sphingolipid metabolism. Its function is as follows. Involved in de novo bacterial ceramide synthesis. This chain is Ceramide hydroxylase, found in Caulobacter vibrioides (strain NA1000 / CB15N) (Caulobacter crescentus).